Reading from the N-terminus, the 210-residue chain is MSGHGHGHGHGHGCCECEHEPAERGVEYELYRRIDIEKLQCLNESRDGDGKLVFKPWDQRTDRNKFVESDADEELLFNIPFTGSVKLKGIIISGEDDESHPAEIRLFKNIPQMSFDDTSREPEQAFRLNRDPRAELEYPTKIARFSNVEHLSIHVSRNFGAESTRVYYIGLRGEYTEAHRHEVTICNYEAAANPADHKVESITPQTQFIS.

The PITH domain occupies 19 to 191 (HEPAERGVEY…EVTICNYEAA (173 aa)).

Belongs to the PITHD1 family.

The protein localises to the cytoplasm. May play a role in promoting megakaryocyte differentiation by up-regulating RUNX1 expression. This Danio rerio (Zebrafish) protein is PITH domain-containing protein 1 (pithd1).